A 464-amino-acid chain; its full sequence is Glycine--tRNA ligase (464 aa).

Arg104 and Glu175 together coordinate substrate. ATP is bound by residues 207–209, 217–222, 292–293, and 336–339; these read RNE, FRTREF, EL, and GVNR. Residue 222-226 participates in substrate binding; it reads FEQME. 332 to 336 is a binding site for substrate; the sequence is EPALG.

Belongs to the class-II aminoacyl-tRNA synthetase family. As to quaternary structure, homodimer.

It is found in the cytoplasm. It carries out the reaction tRNA(Gly) + glycine + ATP = glycyl-tRNA(Gly) + AMP + diphosphate. Catalyzes the attachment of glycine to tRNA(Gly). The sequence is that of Glycine--tRNA ligase from Leptospira interrogans serogroup Icterohaemorrhagiae serovar copenhageni (strain Fiocruz L1-130).